Consider the following 278-residue polypeptide: Putative ABC transporter ATP-binding protein MJ1572 (278 aa).

One can recognise an ABC transporter domain in the interval 5-242 (YRLVDVSYKY…LDELNLDVPE (238 aa)). Position 38–45 (38–45 (GPNGAGKT)) interacts with ATP.

It belongs to the ABC transporter superfamily.

The protein resides in the cell membrane. Functionally, probably part of an ABC transporter complex. Responsible for energy coupling to the transport system. The sequence is that of Putative ABC transporter ATP-binding protein MJ1572 from Methanocaldococcus jannaschii (strain ATCC 43067 / DSM 2661 / JAL-1 / JCM 10045 / NBRC 100440) (Methanococcus jannaschii).